The sequence spans 308 residues: Uricase-2 isozyme 1 (308 aa).

Catalysis depends on charge relay system residues lysine 17 and threonine 63. Threonine 63, aspartate 64, phenylalanine 165, arginine 182, valine 237, glutamine 238, and asparagine 264 together coordinate urate. Histidine 266 serves as the catalytic Charge relay system. Residues serine 306–leucine 308 carry the Microbody targeting signal motif.

The protein belongs to the uricase family.

The protein localises to the peroxisome. The enzyme catalyses urate + O2 + H2O = 5-hydroxyisourate + H2O2. Its pathway is purine metabolism; urate degradation; (S)-allantoin from urate: step 1/3. Functionally, catalyzes the oxidation of uric acid to 5-hydroxyisourate, which is further processed to form (S)-allantoin. This chain is Uricase-2 isozyme 1, found in Canavalia lineata (Beach bean).